The sequence spans 435 residues: Sex peptide receptor (435 aa).

Residues 1–93 lie on the Extracellular side of the membrane; that stretch reads MDNYTDVLYQ…PLEYAMPLYG (93 aa). A helical membrane pass occupies residues 94 to 114; sequence YCMPFLLIITIISNSLIVLVL. Topologically, residues 115–124 are cytoplasmic; sequence SKKSMATPTN. The helical transmembrane segment at 125–145 threads the bilayer; the sequence is FVLMGMAICDMLTVIFPAPGL. Residues 146 to 168 lie on the Extracellular side of the membrane; that stretch reads WYMYTFGNHYKPLHPVSMCLAYS. Residues 169–189 traverse the membrane as a helical segment; it reads IFNEIMPAMCHTISVWLTLAL. Residues 190–211 are Cytoplasmic-facing; the sequence is AVQRYIYVCHAPMARTWCTMPR. Residues 212 to 229 traverse the membrane as a helical segment; it reads VRRCTAYIALLAFLHQLP. Residues 230 to 276 lie on the Extracellular side of the membrane; that stretch reads RFFDRTYMPLVIEWNGSPTEVCHLETSMWVHDYIGVDLYYTSYYLFR. Residues 277 to 297 traverse the membrane as a helical segment; that stretch reads VLFVHLLPCIILVTLNILLFA. Residues 298–327 are Cytoplasmic-facing; it reads AMRQAQERRKLLFRENRKKECKKLRETNCT. A helical membrane pass occupies residues 328–348; that stretch reads TLMLIVVVSVFLLAEIPIAVV. Topologically, residues 349–368 are extracellular; it reads TAMHIVSSLIIEFLDYGLAN. The chain crosses the membrane as a helical span at residues 369–389; the sequence is ICIMLTNFFLVFSYPINFGIY. Topologically, residues 390–435 are cytoplasmic; the sequence is CGMSRQFRETFKEIFLGRLMAKKDSSTKYSIVNGARTCTNTNETVL.

Belongs to the G-protein coupled receptor 1 family. As to expression, in the female, expressed in the reproductive organs; strongly expressed in the spermathecae and the lower oviduct. No expression in the male reproductive organs. In the central nervous system of both sexes, it is expressed in the brain and ventral nerve cord (VNC); strongly expressed in the ventral regions of the suboesophageal ganglion, the cervical connective and in many nerve roots of the brain and VNC. Expressed in the s-LNvs and l-LNvs pdf neurons (at protein level).

It is found in the cell membrane. Receptor for two functionally unrelated ligands; SP (A70A) for controlling reproductive behaviors and MIP for controlling sleep behavior. MIP-SPR pathway functions as a sleep homeostat which perceives the need for sleep and stabilizes it by providing a slow-acting inhibitory input to the fly arousal system that involve the pigment dispersing factor (pdf) neurons. SP-SPR is one of the multiple SP pathways that induce female post-mating behavioral responses (PMR) such as the suppression of mating receptivity and initiation of egg laying. The PMR switch is achieved by mediating the synaptic output of neurons such as those expressing fruitless (fru), double sex (dsx) and pickpocket (ppk). The polypeptide is Sex peptide receptor (Drosophila melanogaster (Fruit fly)).